A 312-amino-acid chain; its full sequence is Glyoxylate/hydroxypyruvate reductase A (312 aa).

Arginine 227 is a catalytic residue. The active-site Proton donor is the histidine 275.

The protein belongs to the D-isomer specific 2-hydroxyacid dehydrogenase family. GhrA subfamily.

The protein resides in the cytoplasm. It catalyses the reaction glycolate + NADP(+) = glyoxylate + NADPH + H(+). The catalysed reaction is (R)-glycerate + NAD(+) = 3-hydroxypyruvate + NADH + H(+). It carries out the reaction (R)-glycerate + NADP(+) = 3-hydroxypyruvate + NADPH + H(+). Its function is as follows. Catalyzes the NADPH-dependent reduction of glyoxylate and hydroxypyruvate into glycolate and glycerate, respectively. The polypeptide is Glyoxylate/hydroxypyruvate reductase A (Salmonella agona (strain SL483)).